A 415-amino-acid chain; its full sequence is MAALCRGTVRACILKPLGLSVSLQVKRNVRALRRTPVRVLPAAEKGRERKEVEARRPQQPRQSEYQTRTSQGVRQASALTEAPALEFRYERALPGDKRLSKVVTIAKSKKFRDRHGQVLLEGRRLLTDALESGAVLQTLFFSRVDYLKLFPPDKLRKANLIKVNFDNIKIWSDVVAPQGLMGIFAKPDHEKISYPTTQTKHTLPLSLICDNIRDPGNLGTILRCAAGAGCNKVLLTKGCVDAWEPKVLRAGMGAHFRLPVISSLDWDIVPNYLSAGTKVFLADNFRPDMKHKTGDVSEKASDYGWVSTNPRRILITEEGYESSSDEEDNADKLYIPGLEVQSYFESWAQSPCAIVIGGETHGLSIESLLLAEKSNGKRLYIPVVPDIDSLNSAMAASILLFEGKRQIENTMKRKS.

A mitochondrion-targeting transit peptide spans 1 to 47; the sequence is MAALCRGTVRACILKPLGLSVSLQVKRNVRALRRTPVRVLPAAEKGR. Residues 41-73 are disordered; sequence PAAEKGRERKEVEARRPQQPRQSEYQTRTSQGV. Positions 44-56 are enriched in basic and acidic residues; sequence EKGRERKEVEARR. Polar residues predominate over residues 59 to 73; sequence QPRQSEYQTRTSQGV. S-adenosyl-L-methionine is bound by residues Gly-357, Ile-381, and Leu-390.

This sequence belongs to the class IV-like SAM-binding methyltransferase superfamily. RNA methyltransferase TrmH family.

The protein localises to the mitochondrion. The catalysed reaction is a uridine in rRNA + S-adenosyl-L-methionine = a 2'-O-methyluridine in rRNA + S-adenosyl-L-homocysteine + H(+). Its function is as follows. S-adenosyl-L-methionine-dependent 2'-O-ribose methyltransferase that catalyzes the formation of 2'-O-methylguanosine at position 1370 (Gm1370) in the mitochondrial large subunit ribosomal RNA (mtLSU rRNA), a conserved modification in the peptidyl transferase domain of the mtLSU rRNA. Also required for formation of 2'-O-methyluridine at position 1369 (Um1369) mediated by MRM2. The sequence is that of rRNA methyltransferase 3, mitochondrial from Xenopus tropicalis (Western clawed frog).